Reading from the N-terminus, the 88-residue chain is Large ribosomal subunit protein eL37A (88 aa).

4 residues coordinate Zn(2+): C19, C22, C34, and C37. The segment at 19–37 (CNRCGRRSFHVQKKTCSSC) adopts a C4-type zinc-finger fold.

This sequence belongs to the eukaryotic ribosomal protein eL37 family. In terms of assembly, component of the large ribosomal subunit (LSU). Mature yeast ribosomes consist of a small (40S) and a large (60S) subunit. The 40S small subunit contains 1 molecule of ribosomal RNA (18S rRNA) and 33 different proteins (encoded by 57 genes). The large 60S subunit contains 3 rRNA molecules (25S, 5.8S and 5S rRNA) and 46 different proteins (encoded by 81 genes). Requires Zn(2+) as cofactor.

The protein localises to the cytoplasm. Component of the ribosome, a large ribonucleoprotein complex responsible for the synthesis of proteins in the cell. The small ribosomal subunit (SSU) binds messenger RNAs (mRNAs) and translates the encoded message by selecting cognate aminoacyl-transfer RNA (tRNA) molecules. The large subunit (LSU) contains the ribosomal catalytic site termed the peptidyl transferase center (PTC), which catalyzes the formation of peptide bonds, thereby polymerizing the amino acids delivered by tRNAs into a polypeptide chain. The nascent polypeptides leave the ribosome through a tunnel in the LSU and interact with protein factors that function in enzymatic processing, targeting, and the membrane insertion of nascent chains at the exit of the ribosomal tunnel. The sequence is that of Large ribosomal subunit protein eL37A from Saccharomyces cerevisiae (strain ATCC 204508 / S288c) (Baker's yeast).